The sequence spans 246 residues: 5-oxoprolinase subunit A (246 aa).

This sequence belongs to the LamB/PxpA family. In terms of assembly, forms a complex composed of PxpA, PxpB and PxpC.

The catalysed reaction is 5-oxo-L-proline + ATP + 2 H2O = L-glutamate + ADP + phosphate + H(+). Catalyzes the cleavage of 5-oxoproline to form L-glutamate coupled to the hydrolysis of ATP to ADP and inorganic phosphate. The chain is 5-oxoprolinase subunit A from Vibrio cholerae serotype O1 (strain M66-2).